A 386-amino-acid polypeptide reads, in one-letter code: MRKRAEPVPPEHESFGRAPLDRECSIKQKLRIPGTKGHYPHDSDCDSKGMKRFGRRYGLWSRLRMFLIFLLGLYIAIPFLVKICPAIQTQLVFLNLVRFPYFIDLKRPEDQGLNHTCNFYLQPEEDVSIGVWHTVPAVLWKDAQGKDLEWYEEVLSTSYPVILYLHGNAGTRGGDHRVQLYKVLSSMGYHVISFDYRGWGDSVGSPSESGMTYDALHVFDWIKARSGDNPVYIWGHSLGTGVATNLVRRLCERETPPDSLILESPFTNIREEAKSHPFSVIYRYFPGFDWFFLDPITASGIKFANDDNVKYISCPLLILHAEDDPVIPFHLGKKLYNIAAPARSLRDYKVQFVPFHKDLGYRHKYIYRSPELRQILRDFLGNTEQQ.

At 1–66 (MRKRAEPVPP…YGLWSRLRMF (66 aa)) the chain is on the cytoplasmic side. The chain crosses the membrane as a helical span at residues 67 to 87 (LIFLLGLYIAIPFLVKICPAI). The Extracellular segment spans residues 88–386 (QTQLVFLNLV…RDFLGNTEQQ (299 aa)). An N-linked (GlcNAc...) asparagine glycan is attached at Asn-114. Residue Ser-237 is the Nucleophile of the active site. Catalysis depends on charge relay system residues Asp-324 and His-363.

Belongs to the serine esterase family.

The protein resides in the endoplasmic reticulum membrane. The enzyme catalyses 1-(9Z-octadecenoyl)-sn-glycero-3-phospho-L-serine + H2O = sn-glycero-3-phospho-L-serine + (9Z)-octadecenoate + H(+). The catalysed reaction is 1-(9Z-octadecenoyl)-sn-glycero-3-phospho-(1'-sn-glycerol) + H2O = sn-glycero-3-phospho-(1'-sn-glycerol) + (9Z)-octadecenoate + H(+). It catalyses the reaction 1-(9Z-octadecenoyl)-sn-glycero-3-phospho-(1D-myo-inositol) + H2O = sn-glycero-3-phospho-1D-myo-inositol + (9Z)-octadecenoate + H(+). It carries out the reaction 1-(9Z-octadecenoyl)-sn-glycero-3-phosphoethanolamine + H2O = sn-glycero-3-phosphoethanolamine + (9Z)-octadecenoate + H(+). The enzyme catalyses 1-(9Z-octadecenoyl)-sn-glycero-3-phosphocholine + H2O = 1-(9Z-octadecenoyl)-sn-glycerol + phosphocholine + H(+). The catalysed reaction is 2-(9Z-octadecenoyl)-glycerol + H2O = glycerol + (9Z)-octadecenoate + H(+). It catalyses the reaction 1-hexadecanoyl-sn-glycero-3-phospho-L-serine + H2O = sn-glycero-3-phospho-L-serine + hexadecanoate + H(+). It carries out the reaction 2-(5Z,8Z,11Z,14Z-eicosatetraenoyl)-glycerol + H2O = glycerol + (5Z,8Z,11Z,14Z)-eicosatetraenoate + H(+). The enzyme catalyses Hydrolyzes glycerol monoesters of long-chain fatty acids.. The catalysed reaction is 1-decanoylglycerol + H2O = decanoate + glycerol + H(+). It catalyses the reaction 1-dodecanoylglycerol + H2O = dodecanoate + glycerol + H(+). It carries out the reaction 1-tetradecanoylglycerol + H2O = tetradecanoate + glycerol + H(+). The enzyme catalyses 2-hexadecanoylglycerol + H2O = glycerol + hexadecanoate + H(+). The catalysed reaction is 1-(9Z-octadecenoyl)-glycerol + H2O = glycerol + (9Z)-octadecenoate + H(+). It catalyses the reaction 2-(9Z,12Z-octadecadienoyl)-glycerol + H2O = (9Z,12Z)-octadecadienoate + glycerol + H(+). It carries out the reaction 1-(5Z,8Z,11Z,14Z-eicosatetraenoyl)-glycerol + H2O = glycerol + (5Z,8Z,11Z,14Z)-eicosatetraenoate + H(+). The enzyme catalyses 1-(9Z,12Z-octadecadienoyl)-glycerol + H2O = (9Z,12Z)-octadecadienoate + glycerol + H(+). The catalysed reaction is 1-hexadecanoylglycerol + H2O = glycerol + hexadecanoate + H(+). It catalyses the reaction 1-octadecanoylglycerol + H2O = octadecanoate + glycerol + H(+). It carries out the reaction 1-octadecanoyl-2-(9,10-epoxyoctadecanoyl)-sn-glycero-3-phospho-L-serine + H2O = 9,10-epoxyoctadecanoate + 1-octadecanoyl-sn-glycero-3-phosphoserine + H(+). The enzyme catalyses 1-octadecanoyl-2-(10-hydroxyoctadecanoyl)-sn-glycero-3-phospho-L-serine + H2O = 1-octadecanoyl-sn-glycero-3-phosphoserine + 10-hydroxyoctadecanoate + H(+). The catalysed reaction is 1-hexadecanoyl-2-(10-hydroxyoctadecanoyl)-sn-glycero-3-phospho-L-serine + H2O = 10-hydroxyoctadecanoate + 1-hexadecanoyl-sn-glycero-3-phospho-L-serine + H(+). Functionally, lysophosphatidylserine (LPS) lipase that mediates the hydrolysis of lysophosphatidylserine, a class of signaling lipids that regulates immunological and neurological processes. Represents a major lysophosphatidylserine lipase in the brain, thereby playing a key role in the central nervous system. Also able to hydrolyze oxidized phosphatidylserine; oxidized phosphatidylserine is produced in response to severe inflammatory stress and constitutes a proapoptotic 'eat me' signal. Also has monoacylglycerol (MAG) lipase activity: hydrolyzes 2-arachidonoylglycerol (2-AG), thereby acting as a regulator of endocannabinoid signaling pathways. Has a strong preference for very-long-chain lipid substrates; substrate specificity is likely due to improved catalysis and not improved substrate binding. This chain is Lysophosphatidylserine lipase ABHD12, found in Xenopus tropicalis (Western clawed frog).